Reading from the N-terminus, the 62-residue chain is Sperm protamine P1 (62 aa).

Residues 1–62 (MARSRRHSRS…RCSRRRRRRC (62 aa)) form a disordered region.

It belongs to the protamine P1 family. In terms of tissue distribution, testis.

It localises to the nucleus. Its subcellular location is the chromosome. Protamines substitute for histones in the chromatin of sperm during the haploid phase of spermatogenesis. They compact sperm DNA into a highly condensed, stable and inactive complex. This Planigale ingrami (Long-tailed planigale) protein is Sperm protamine P1 (PRM1).